Reading from the N-terminus, the 188-residue chain is Pro-FMRFamide-related neuropeptide VF (188 aa).

Positions 1 to 26 (MEIISLKRFILLTVATSSFLTSNTFC) are cleaved as a signal peptide. A propeptide spanning residues 27 to 57 (TDEFMMPHFHSKEGDGKYSQLRGIPKGEKER) is cleaved from the precursor. A Phenylalanine amide modification is found at Phe-94. A propeptide spanning residues 97–106 (TIDEKRSPAA) is cleaved from the precursor. 2 disordered regions span residues 116 to 144 (SHFPSLPQRFGRTTARSPKTPADLPQKPL) and 163 to 188 (IQSPGGKRTRRGAFVETDDAERKPEK). Phe-125 carries the phenylalanine amide modification. Positions 128 to 188 (TTARSPKTPA…TDDAERKPEK (61 aa)) are excised as a propeptide.

Belongs to the FARP (FMRFamide related peptide) family.

It localises to the secreted. Efficiently inhibits forskolin-induced production of cAMP. Acts as a potent negative regulator of gonadotropin synthesis and secretion. Induces secretion of prolactin. Functionally, efficiently inhibits forskolin-induced production of cAMP. Blocks morphine-induced analgesia. This is Pro-FMRFamide-related neuropeptide VF (Npvf) from Mus musculus (Mouse).